Consider the following 1280-residue polypeptide: SET and MYND domain-containing protein DDB_G0284059 (1280 aa).

2 disordered regions span residues M1–H35 and I111–Q167. Low complexity-rich tracts occupy residues N16 to N25 and E117 to P153. TPR repeat units lie at residues S272–E305 and H383–R416. Residues Q439–Q468 adopt a coiled-coil conformation. The Zn(2+) site is built by C533, C536, C546, C549, C555, C559, H568, and C572. The MYND-type zinc-finger motif lies at C533–C572. 4 disordered regions span residues A601–N642, A659–T726, Q854–P905, and A1039–N1079. 5 stretches are compositionally biased toward low complexity: residues A659–E697, S712–T726, Q854–P898, Q1042–Q1053, and N1061–N1079. Positions C822–G965 constitute an SET domain. The TPR 3 repeat unit spans residues G1218 to W1251.

It belongs to the class V-like SAM-binding methyltransferase superfamily.

In terms of biological role, probable methyltransferase. The protein is SET and MYND domain-containing protein DDB_G0284059 of Dictyostelium discoideum (Social amoeba).